Consider the following 178-residue polypeptide: Probable chorismate pyruvate-lyase (178 aa).

Residues Met-37, Arg-78, Leu-114, and Glu-165 each coordinate substrate.

Belongs to the UbiC family.

It localises to the cytoplasm. The enzyme catalyses chorismate = 4-hydroxybenzoate + pyruvate. It functions in the pathway cofactor biosynthesis; ubiquinone biosynthesis. Functionally, removes the pyruvyl group from chorismate, with concomitant aromatization of the ring, to provide 4-hydroxybenzoate (4HB) for the ubiquinone pathway. This Aeromonas salmonicida (strain A449) protein is Probable chorismate pyruvate-lyase.